The primary structure comprises 123 residues: MIQEQTMLNVADNSGARRVMCIKVLGGSHRRYAGIGDIIKITIKEAIPRGKVKKGDVLKAVVVRTKKGVRRPDGSVIRFDGNACVILNNNSEQPIGTRIFGPVTRELRNEKFMKIISLAPEVL.

This sequence belongs to the universal ribosomal protein uL14 family. Part of the 50S ribosomal subunit. Forms a cluster with proteins L3 and L19. In the 70S ribosome, L14 and L19 interact and together make contacts with the 16S rRNA in bridges B5 and B8.

In terms of biological role, binds to 23S rRNA. Forms part of two intersubunit bridges in the 70S ribosome. This chain is Large ribosomal subunit protein uL14, found in Yersinia pestis bv. Antiqua (strain Antiqua).